We begin with the raw amino-acid sequence, 343 residues long: N-acetyl-gamma-glutamyl-phosphate reductase (343 aa).

Residue Cys148 is part of the active site.

The protein belongs to the NAGSA dehydrogenase family. Type 1 subfamily.

Its subcellular location is the cytoplasm. The catalysed reaction is N-acetyl-L-glutamate 5-semialdehyde + phosphate + NADP(+) = N-acetyl-L-glutamyl 5-phosphate + NADPH + H(+). It functions in the pathway amino-acid biosynthesis; L-arginine biosynthesis; N(2)-acetyl-L-ornithine from L-glutamate: step 3/4. In terms of biological role, catalyzes the NADPH-dependent reduction of N-acetyl-5-glutamyl phosphate to yield N-acetyl-L-glutamate 5-semialdehyde. In Caldicellulosiruptor saccharolyticus (strain ATCC 43494 / DSM 8903 / Tp8T 6331), this protein is N-acetyl-gamma-glutamyl-phosphate reductase.